A 133-amino-acid chain; its full sequence is ATP synthase epsilon chain, chloroplastic (133 aa).

It belongs to the ATPase epsilon chain family. In terms of assembly, F-type ATPases have 2 components, CF(1) - the catalytic core - and CF(0) - the membrane proton channel. CF(1) has five subunits: alpha(3), beta(3), gamma(1), delta(1), epsilon(1). CF(0) has three main subunits: a, b and c.

It localises to the plastid. Its subcellular location is the chloroplast thylakoid membrane. Its function is as follows. Produces ATP from ADP in the presence of a proton gradient across the membrane. This is ATP synthase epsilon chain, chloroplastic from Chara vulgaris (Common stonewort).